The primary structure comprises 114 residues: Large ribosomal subunit protein bL19 (114 aa).

It belongs to the bacterial ribosomal protein bL19 family.

Its function is as follows. This protein is located at the 30S-50S ribosomal subunit interface and may play a role in the structure and function of the aminoacyl-tRNA binding site. This is Large ribosomal subunit protein bL19 from Thermoanaerobacter sp. (strain X514).